The following is a 467-amino-acid chain: MQQAQGLKRGLSARHIRFMALGSAIGTGLFYGSASAIQMAGPAVLLAYLIGGAAVFMVMRALGEMAVHNPVAGSFGHYATTYLGPMAGFILGWTYAFEMVIVAIADVTAFGIYMGFWFPEVARWIWVLGIVFLIGGLNLCNVKVFGEMEFWLSLLKVGAIVAMILAGLGIMAFGFSQVGTGHAVGMSNLFDHGGFMPNGVGGLIASFAVVMFAFGGIEIIGVTAGEAKDPQRVIPKAINAVPLRILLFYVLTLFVLMCLYPWPQIGSQGSPFVQIFSNLGIGSAAAVLNVVVISAAISAINSDIFGAGRMMYGLAQQGHAPRGFSKLSKHGVPWMTVVVMGAALLIGVLLNYLIPENVFLLIASIATFATVWVWLMILLTQVAMRRSMSREQVAQLKFPVPFWPYGPAMAIAFMVFIFGVLGYFPDTQAALIVGVIWVVFLVASYLLWCKPRAGQGQPVAEPAELHR.

13 helical membrane passes run 18–38, 39–59, 71–91, 99–119, 125–145, 155–175, 200–220, 245–265, 280–300, 334–354, 358–378, 402–422, and 429–449; these read FMAL…SAIQ, MAGP…FMVM, VAGS…GFIL, MVIV…FWFP, IWVL…VKVF, LKVG…AFGF, VGGL…IEII, ILLF…WPQI, GIGS…ISAI, WMTV…NYLI, VFLL…LMIL, FWPY…GVLG, and AALI…LLWC.

This sequence belongs to the amino acid-polyamine-organocation (APC) superfamily. Amino acid transporter (AAT) (TC 2.A.3.1) family.

It is found in the cell inner membrane. The enzyme catalyses L-histidine(out) + n H(+)(out) = L-histidine(in) + n H(+)(in). With respect to regulation, transport activity is inhibited by the proton ionophores carbonyl cyanide m-chlorophenyl hydrazine (CCCP) and 2,4-dinitrophenol (DNP), but not by valinomycin, nigericin and nonactin. Uptake is reduced in the presence of the sulfhydryl reagent N-ethylmaleimide (NEM). Uptake is not affected by arginine, lysine, proline or compounds structurally related to histidine such as imidazole, 3-amino-1,2,4-triazole and urocanate. Only 1,2,4-triazolyl-3-alanine reduces the rate of L-histidine uptake significantly. Major high-affinity histidine transporter. Binds and catalyzes the uptake of histidine into the cell. Functions as an histidine:proton symporter with high specificity for histidine. The protein is L-histidine transporter HutT of Pseudomonas putida (strain ATCC 47054 / DSM 6125 / CFBP 8728 / NCIMB 11950 / KT2440).